The primary structure comprises 410 residues: Na(+)-translocating NADH-quinone reductase subunit B (410 aa).

3 consecutive transmembrane segments (helical) span residues 56 to 76 (MMIL…YNVG), 119 to 139 (LFGA…GGFW), and 159 to 179 (SILF…ALGI). FMN phosphoryl threonine is present on T232. Transmembrane regions (helical) follow at residues 266-286 (GSIG…IVFA), 293-313 (IIAG…FIGS), 318-338 (MFAM…GMLF), 347-367 (SFTN…CVLI), and 377-397 (GMML…YFVA).

It belongs to the NqrB/RnfD family. In terms of assembly, composed of six subunits; NqrA, NqrB, NqrC, NqrD, NqrE and NqrF. It depends on FMN as a cofactor.

The protein resides in the cell inner membrane. It catalyses the reaction a ubiquinone + n Na(+)(in) + NADH + H(+) = a ubiquinol + n Na(+)(out) + NAD(+). Functionally, NQR complex catalyzes the reduction of ubiquinone-1 to ubiquinol by two successive reactions, coupled with the transport of Na(+) ions from the cytoplasm to the periplasm. NqrA to NqrE are probably involved in the second step, the conversion of ubisemiquinone to ubiquinol. The polypeptide is Na(+)-translocating NADH-quinone reductase subunit B (Neisseria meningitidis serogroup B (strain ATCC BAA-335 / MC58)).